Consider the following 306-residue polypeptide: tRNA dimethylallyltransferase (306 aa).

12-19 (GPTGTKKS) is an ATP binding site.

This sequence belongs to the IPP transferase family. As to quaternary structure, monomer. The cofactor is Mg(2+).

The catalysed reaction is adenosine(37) in tRNA + dimethylallyl diphosphate = N(6)-dimethylallyladenosine(37) in tRNA + diphosphate. Catalyzes the transfer of a dimethylallyl group onto the adenine at position 37 in tRNAs that read codons beginning with uridine, leading to the formation of N6-(dimethylallyl)adenosine (i(6)A). The protein is tRNA dimethylallyltransferase of Mycoplasmoides gallisepticum (strain R(low / passage 15 / clone 2)) (Mycoplasma gallisepticum).